Here is a 234-residue protein sequence, read N- to C-terminus: Carboxymethylenebutenolidase 1 (234 aa).

Catalysis depends on residues C123, D171, and H201.

It belongs to the dienelactone hydrolase family. As to quaternary structure, monomer.

It catalyses the reaction 2-(5-oxo-2,5-dihydrofuran-2-ylidene)acetate + H2O = 4-oxohex-2-enedioate + H(+). Its pathway is aromatic compound metabolism; 3-chlorocatechol degradation. Ring cleavage of cyclic ester dienelactone to produce maleylacetate. The protein is Carboxymethylenebutenolidase 1 (tfdEI) of Cupriavidus pinatubonensis (strain JMP 134 / LMG 1197) (Cupriavidus necator (strain JMP 134)).